Here is a 473-residue protein sequence, read N- to C-terminus: ATP synthase subunit beta (473 aa).

Position 158–165 (158–165 (GGAGVGKT)) interacts with ATP.

The protein belongs to the ATPase alpha/beta chains family. F-type ATPases have 2 components, CF(1) - the catalytic core - and CF(0) - the membrane proton channel. CF(1) has five subunits: alpha(3), beta(3), gamma(1), delta(1), epsilon(1). CF(0) has three main subunits: a(1), b(2) and c(9-12). The alpha and beta chains form an alternating ring which encloses part of the gamma chain. CF(1) is attached to CF(0) by a central stalk formed by the gamma and epsilon chains, while a peripheral stalk is formed by the delta and b chains.

It is found in the cell membrane. It carries out the reaction ATP + H2O + 4 H(+)(in) = ADP + phosphate + 5 H(+)(out). Functionally, produces ATP from ADP in the presence of a proton gradient across the membrane. The catalytic sites are hosted primarily by the beta subunits. The chain is ATP synthase subunit beta from Bacillus licheniformis (strain ATCC 14580 / DSM 13 / JCM 2505 / CCUG 7422 / NBRC 12200 / NCIMB 9375 / NCTC 10341 / NRRL NRS-1264 / Gibson 46).